The chain runs to 364 residues: Spermidine/putrescine import ATP-binding protein PotA (364 aa).

Residues 5–235 (LSFKDVSKGF…PVNRFVADFI (231 aa)) enclose the ABC transporter domain. 37 to 44 (GPSGCGKT) contributes to the ATP binding site.

It belongs to the ABC transporter superfamily. Spermidine/putrescine importer (TC 3.A.1.11.1) family. In terms of assembly, the complex is composed of two ATP-binding proteins (PotA), two transmembrane proteins (PotB and PotC) and a solute-binding protein (PotD).

The protein localises to the cell membrane. It catalyses the reaction ATP + H2O + polyamine-[polyamine-binding protein]Side 1 = ADP + phosphate + polyamineSide 2 + [polyamine-binding protein]Side 1.. Functionally, part of the ABC transporter complex PotABCD involved in spermidine/putrescine import. Responsible for energy coupling to the transport system. The sequence is that of Spermidine/putrescine import ATP-binding protein PotA from Staphylococcus epidermidis (strain ATCC 35984 / DSM 28319 / BCRC 17069 / CCUG 31568 / BM 3577 / RP62A).